The sequence spans 418 residues: Glutamyl-tRNA(Gln) amidotransferase subunit D (418 aa).

Residues 74–405 (KNISILSTGG…KEAKELMSKN (332 aa)) enclose the Asparaginase/glutaminase domain. Active-site residues include threonine 84, threonine 160, aspartate 161, and lysine 237.

Belongs to the asparaginase 1 family. GatD subfamily. As to quaternary structure, heterodimer of GatD and GatE.

It carries out the reaction L-glutamyl-tRNA(Gln) + L-glutamine + ATP + H2O = L-glutaminyl-tRNA(Gln) + L-glutamate + ADP + phosphate + H(+). Allows the formation of correctly charged Gln-tRNA(Gln) through the transamidation of misacylated Glu-tRNA(Gln) in organisms which lack glutaminyl-tRNA synthetase. The reaction takes place in the presence of glutamine and ATP through an activated gamma-phospho-Glu-tRNA(Gln). The GatDE system is specific for glutamate and does not act on aspartate. The polypeptide is Glutamyl-tRNA(Gln) amidotransferase subunit D (Methanococcus maripaludis (strain DSM 14266 / JCM 13030 / NBRC 101832 / S2 / LL)).